The sequence spans 874 residues: Alanine--tRNA ligase (874 aa).

Zn(2+) is bound by residues H562, H566, C664, and H668.

It belongs to the class-II aminoacyl-tRNA synthetase family. It depends on Zn(2+) as a cofactor.

The protein resides in the cytoplasm. The enzyme catalyses tRNA(Ala) + L-alanine + ATP = L-alanyl-tRNA(Ala) + AMP + diphosphate. Catalyzes the attachment of alanine to tRNA(Ala) in a two-step reaction: alanine is first activated by ATP to form Ala-AMP and then transferred to the acceptor end of tRNA(Ala). Also edits incorrectly charged Ser-tRNA(Ala) and Gly-tRNA(Ala) via its editing domain. The polypeptide is Alanine--tRNA ligase (Shewanella halifaxensis (strain HAW-EB4)).